The sequence spans 45 residues: Pyruvate dehydrogenase E1 component (45 aa).

In terms of assembly, homodimer. Thiamine diphosphate is required as a cofactor.

It catalyses the reaction N(6)-[(R)-lipoyl]-L-lysyl-[protein] + pyruvate + H(+) = N(6)-[(R)-S(8)-acetyldihydrolipoyl]-L-lysyl-[protein] + CO2. The pyruvate dehydrogenase complex catalyzes the overall conversion of pyruvate to acetyl-CoA and CO(2). It contains multiple copies of three enzymatic components: pyruvate dehydrogenase (E1), dihydrolipoamide acetyltransferase (E2) and lipoamide dehydrogenase (E3). The polypeptide is Pyruvate dehydrogenase E1 component (Azotobacter vinelandii).